The chain runs to 273 residues: DNA repair protein RecO (273 aa).

It belongs to the RecO family.

In terms of biological role, involved in DNA repair and RecF pathway recombination. This chain is DNA repair protein RecO, found in Mycolicibacterium gilvum (strain PYR-GCK) (Mycobacterium gilvum (strain PYR-GCK)).